Reading from the N-terminus, the 280-residue chain is Ribonuclease P protein subunit p38 (280 aa).

Ala2 carries the post-translational modification N-acetylalanine. Residues Ser12, Ser221, and Ser230 each carry the phosphoserine modification. The disordered stretch occupies residues 202-227 (WLPDRTQGPTDSLETEPSESQDNEIL). Residues 214–226 (LETEPSESQDNEI) show a composition bias toward acidic residues. Residues 254-280 (QPLKIKKLIPNPSKIRKPPKSKKSISK) form a disordered region. Residues 267–280 (KIRKPPKSKKSISK) are compositionally biased toward basic residues.

Belongs to the eukaryotic ribosomal protein eL8 family. As to quaternary structure, component of nuclear RNase P and RNase MRP ribonucleoproteins. RNase P consists of a catalytic RNA moiety and about 10 protein subunits; POP1, POP4, POP5, POP7, RPP14, RPP21, RPP25, RPP30, RPP38 and RPP40. Within the RNase P complex, POP1, POP7 and RPP25 form the 'finger' subcomplex, POP5, RPP14, RPP40 and homodimeric RPP30 form the 'palm' subcomplex, and RPP21, POP4 and RPP38 form the 'wrist' subcomplex. All subunits of the RNase P complex interact with the catalytic RNA. Several subunits of RNase P are also part of the RNase MRP complex. RNase MRP consists of a catalytic RNA moiety and about 8 protein subunits; POP1, POP7, RPP25, RPP30, RPP38, RPP40 and possibly also POP4 and POP5.

The protein resides in the nucleus. It localises to the nucleolus. Component of ribonuclease P, a ribonucleoprotein complex that generates mature tRNA molecules by cleaving their 5'-ends. Also a component of the MRP ribonuclease complex, which cleaves pre-rRNA sequences. This chain is Ribonuclease P protein subunit p38 (Rpp38), found in Mus musculus (Mouse).